The sequence spans 368 residues: tRNA-specific 2-thiouridylase MnmA (368 aa).

ATP-binding positions include 11 to 18 and M37; that span reads GMSGGVDS. The tract at residues 97–99 is interaction with target base in tRNA; that stretch reads NPD. Residue C102 is the Nucleophile of the active site. C102 and C199 are disulfide-bonded. G127 contacts ATP. Residues 149-151 are interaction with tRNA; sequence KDQ. Residue C199 is the Cysteine persulfide intermediate of the active site. An interaction with tRNA region spans residues 311–312; the sequence is RY.

It belongs to the MnmA/TRMU family. In terms of assembly, interacts with TusE.

Its subcellular location is the cytoplasm. The enzyme catalyses S-sulfanyl-L-cysteinyl-[protein] + uridine(34) in tRNA + AH2 + ATP = 2-thiouridine(34) in tRNA + L-cysteinyl-[protein] + A + AMP + diphosphate + H(+). Its function is as follows. Catalyzes the 2-thiolation of uridine at the wobble position (U34) of tRNA(Lys), tRNA(Glu) and tRNA(Gln), leading to the formation of s(2)U34, the first step of tRNA-mnm(5)s(2)U34 synthesis. Sulfur is provided by IscS, via a sulfur-relay system. Binds ATP and its substrate tRNAs. In Klebsiella pneumoniae (strain 342), this protein is tRNA-specific 2-thiouridylase MnmA.